The primary structure comprises 544 residues: 4-coumarate:CoA ligase 1 (544 aa).

Belongs to the ATP-dependent AMP-binding enzyme family. As to quaternary structure, monomer. In terms of tissue distribution, mostly expressed in flower organs, with highest levels in corollas, and, to a lesser extent, in tubes, sepals, pistils, stamen and ovaries. Also present at low levels in leaves.

It localises to the cytoplasm. The protein resides in the cytosol. The catalysed reaction is (E)-4-coumarate + ATP + CoA = (E)-4-coumaroyl-CoA + AMP + diphosphate. It carries out the reaction (E)-caffeate + ATP + CoA = (E)-caffeoyl-CoA + AMP + diphosphate. It catalyses the reaction benzoate + ATP + CoA = benzoyl-CoA + AMP + diphosphate. The enzyme catalyses (E)-cinnamate + ATP + CoA = (E)-cinnamoyl-CoA + AMP + diphosphate. The catalysed reaction is (E)-ferulate + ATP + CoA = (E)-feruloyl-CoA + AMP + diphosphate. It participates in phenylpropanoid metabolism; trans-cinnamate biosynthesis. Its pathway is phytoalexin biosynthesis; 3,4',5-trihydroxystilbene biosynthesis; 3,4',5-trihydroxystilbene from trans-4-coumarate: step 1/2. In terms of biological role, catalyzes the formation of CoA esters of trans-cinnamic acid, 4-coumaric acid, ferulic acid, benzoic acid and caffeic acid. The protein is 4-coumarate:CoA ligase 1 of Petunia hybrida (Petunia).